Reading from the N-terminus, the 401-residue chain is Argininosuccinate synthase (401 aa).

ATP is bound at residue 8–16; that stretch reads AYSGGLDTS. Y85 contributes to the L-citrulline binding site. G115 serves as a coordination point for ATP. L-aspartate contacts are provided by T117, N121, and D122. An L-citrulline-binding site is contributed by N121. The L-citrulline site is built by R125, S173, E258, and Y270.

Belongs to the argininosuccinate synthase family. Type 1 subfamily. Homotetramer.

It is found in the cytoplasm. The enzyme catalyses L-citrulline + L-aspartate + ATP = 2-(N(omega)-L-arginino)succinate + AMP + diphosphate + H(+). It functions in the pathway amino-acid biosynthesis; L-arginine biosynthesis; L-arginine from L-ornithine and carbamoyl phosphate: step 2/3. The polypeptide is Argininosuccinate synthase (Staphylococcus carnosus (strain TM300)).